We begin with the raw amino-acid sequence, 203 residues long: FMN-dependent NADH:quinone oxidoreductase 3 (203 aa).

FMN contacts are provided by residues Ser9, 15–17 (SAS), 95–98 (MYNF), and 139–142 (TAGG).

The protein belongs to the azoreductase type 1 family. As to quaternary structure, homodimer. It depends on FMN as a cofactor.

The catalysed reaction is 2 a quinone + NADH + H(+) = 2 a 1,4-benzosemiquinone + NAD(+). The enzyme catalyses N,N-dimethyl-1,4-phenylenediamine + anthranilate + 2 NAD(+) = 2-(4-dimethylaminophenyl)diazenylbenzoate + 2 NADH + 2 H(+). Its function is as follows. Quinone reductase that provides resistance to thiol-specific stress caused by electrophilic quinones. In terms of biological role, also exhibits azoreductase activity. Catalyzes the reductive cleavage of the azo bond in aromatic azo compounds to the corresponding amines. The protein is FMN-dependent NADH:quinone oxidoreductase 3 of Pseudomonas fluorescens (strain Pf0-1).